A 141-amino-acid chain; its full sequence is Nucleoside diphosphate kinase (141 aa).

Lysine 11, phenylalanine 59, arginine 87, threonine 93, arginine 104, and asparagine 114 together coordinate ATP. Histidine 117 functions as the Pros-phosphohistidine intermediate in the catalytic mechanism.

The protein belongs to the NDK family. In terms of assembly, homotetramer. Mg(2+) serves as cofactor.

Its subcellular location is the cytoplasm. The enzyme catalyses a 2'-deoxyribonucleoside 5'-diphosphate + ATP = a 2'-deoxyribonucleoside 5'-triphosphate + ADP. It carries out the reaction a ribonucleoside 5'-diphosphate + ATP = a ribonucleoside 5'-triphosphate + ADP. Major role in the synthesis of nucleoside triphosphates other than ATP. The ATP gamma phosphate is transferred to the NDP beta phosphate via a ping-pong mechanism, using a phosphorylated active-site intermediate. In Paracidovorax citrulli (strain AAC00-1) (Acidovorax citrulli), this protein is Nucleoside diphosphate kinase.